The chain runs to 87 residues: Small ribosomal subunit protein uS15 (87 aa).

The protein belongs to the universal ribosomal protein uS15 family. In terms of assembly, part of the 30S ribosomal subunit. Forms a bridge to the 50S subunit in the 70S ribosome, contacting the 23S rRNA.

Functionally, one of the primary rRNA binding proteins, it binds directly to 16S rRNA where it helps nucleate assembly of the platform of the 30S subunit by binding and bridging several RNA helices of the 16S rRNA. Its function is as follows. Forms an intersubunit bridge (bridge B4) with the 23S rRNA of the 50S subunit in the ribosome. This chain is Small ribosomal subunit protein uS15, found in Dehalococcoides mccartyi (strain ATCC BAA-2100 / JCM 16839 / KCTC 5957 / BAV1).